Reading from the N-terminus, the 44-residue chain is Photosystem I reaction center subunit IX (44 aa).

Residues 7 to 27 traverse the membrane as a helical segment; sequence YLSAAPVLSTIWFGALAGLLI.

It belongs to the PsaJ family.

Its subcellular location is the plastid. It localises to the chloroplast thylakoid membrane. Its function is as follows. May help in the organization of the PsaE and PsaF subunits. The protein is Photosystem I reaction center subunit IX of Pelargonium hortorum (Common geranium).